The chain runs to 486 residues: Cytochrome P450 monooxygenase 1 (486 aa).

Residues 1-21 (MSHFLPTLILTSLTLVAYVLA) form the signal peptide. N346 carries N-linked (GlcNAc...) asparagine glycosylation. Residue C430 coordinates heme. N434 carries an N-linked (GlcNAc...) asparagine glycan.

Belongs to the cytochrome P450 family. Heme serves as cofactor.

It participates in mycotoxin biosynthesis. Functionally, cytochrome P450 monooxygenase; part of the gene cluster that mediates the biosynthesis of aphidicolin, a specific inhibitor of eukaryotic DNA synthesis and DNA polymerase alpha. The geranylgeranyl pyrophosphate synthase GGS is required for supplying a sufficient amount of geranylgeranyl diphosphate (GGDP), the general precursor of diterpenes. The diterpene synthase ACS then catalyzes the conversion of geranylgeranyl diphosphate to aphidicolan-16-beta-ol via the intermediate syn-copalyldiphosphate (syn-CDP). In addition to aphidicolan-16-beta-ol, the enzyme also produces low levels of amphidicol-15-ene and amphidicol-16-ene. The cytochrome P450 monooxygenase P450-2 then catalyzes the two-step hydroxylation from aphidicolan-16-beta-ol to 3-deoxyaphidicolin via a 17,3-deoxyaphidicolin intermediate. Finally, the cytochrome P450 monooxygenase P450-1 converts 3-deoxyaphidicolin to aphidicolin. This Neocamarosporium betae (Beet black rot fungus) protein is Cytochrome P450 monooxygenase 1 (PbP450-1).